The sequence spans 124 residues: Large ribosomal subunit protein bL12 (124 aa).

Belongs to the bacterial ribosomal protein bL12 family. As to quaternary structure, homodimer. Part of the ribosomal stalk of the 50S ribosomal subunit. Forms a multimeric L10(L12)X complex, where L10 forms an elongated spine to which 2 to 4 L12 dimers bind in a sequential fashion. Binds GTP-bound translation factors.

Forms part of the ribosomal stalk which helps the ribosome interact with GTP-bound translation factors. Is thus essential for accurate translation. In Azobacteroides pseudotrichonymphae genomovar. CFP2, this protein is Large ribosomal subunit protein bL12.